A 254-amino-acid chain; its full sequence is Probable WRKY transcription factor 67 (254 aa).

The segment at residues 102-170 (SRTMCPNDGF…YLGKHVCKAF (69 aa)) is a DNA-binding region (WRKY).

It belongs to the WRKY group III family.

It is found in the nucleus. Functionally, transcription factor. Interacts specifically with the W box (5'-(T)TGAC[CT]-3'), a frequently occurring elicitor-responsive cis-acting element. This is Probable WRKY transcription factor 67 (WRKY67) from Arabidopsis thaliana (Mouse-ear cress).